We begin with the raw amino-acid sequence, 267 residues long: Dihydropteroate synthase (267 aa).

One can recognise a Pterin-binding domain in the interval 1 to 251; the sequence is MTKTKIMGIL…NVELNAKLAK (251 aa). A Mg(2+)-binding site is contributed by Asn11. (7,8-dihydropterin-6-yl)methyl diphosphate is bound by residues Thr51, Asp84, Asn103, Asp167, Lys203, and 239 to 241; that span reads RVH.

Belongs to the DHPS family. As to quaternary structure, homodimer. Requires Mg(2+) as cofactor.

It carries out the reaction (7,8-dihydropterin-6-yl)methyl diphosphate + 4-aminobenzoate = 7,8-dihydropteroate + diphosphate. Its pathway is cofactor biosynthesis; tetrahydrofolate biosynthesis; 7,8-dihydrofolate from 2-amino-4-hydroxy-6-hydroxymethyl-7,8-dihydropteridine diphosphate and 4-aminobenzoate: step 1/2. Catalyzes the condensation of para-aminobenzoate (pABA) with 6-hydroxymethyl-7,8-dihydropterin diphosphate (DHPt-PP) to form 7,8-dihydropteroate (H2Pte), the immediate precursor of folate derivatives. The chain is Dihydropteroate synthase (folP) from Staphylococcus aureus (strain MW2).